Here is a 262-residue protein sequence, read N- to C-terminus: GTP cyclohydrolase 1 type 2 homolog (262 aa).

A divalent metal cation contacts are provided by H68, H69, D108, H226, and E229.

This sequence belongs to the GTP cyclohydrolase I type 2/NIF3 family. As to quaternary structure, homohexamer.

The protein is GTP cyclohydrolase 1 type 2 homolog of Ureaplasma parvum serovar 3 (strain ATCC 700970).